Reading from the N-terminus, the 631-residue chain is RING finger protein 112 (631 aa).

The RING-type zinc-finger motif lies at 57 to 98 (CSICLERLREPISLDCGHDFCIRCFSTHRIPGCELPCCPECR). The interval 131–631 (AVRAERLLLV…GDREPLLQEE (501 aa)) is interaction with ZBTB16. The region spanning 166-397 (DTPVCLLAVL…YISDVLSTAP (232 aa)) is the GB1/RHD3-type G domain. Position 317 to 318 (317 to 318 (RD)) interacts with GTP. The next 2 membrane-spanning stretches (helical) occupy residues 547–567 (LAAV…GVVG) and 580–600 (GMVA…GGGV).

This sequence belongs to the TRAFAC class dynamin-like GTPase superfamily. GB1/RHD3 GTPase family. GB1 subfamily. Self-associates. Interacts with SP1 in an oxidative stress-regulated manner. Interacts with SIGMAR1 in an oxidative stress-regulated manner. Interacts with ZBTB16 (via C2H2-type zinc finger domains 1 and 2). In terms of processing, auto-ubiquitinated. In terms of tissue distribution, predominantly expressed in brain.

It localises to the membrane. The protein localises to the cytoplasm. It is found in the nucleus. The protein resides in the nuclear body. Its subcellular location is the nucleoplasm. It localises to the endosome. The protein localises to the cytoplasmic vesicle. It is found in the secretory vesicle. The protein resides in the synaptic vesicle. Its subcellular location is the postsynaptic density. It localises to the perikaryon. The protein localises to the cell projection. It is found in the neuron projection. The enzyme catalyses S-ubiquitinyl-[E2 ubiquitin-conjugating enzyme]-L-cysteine + [acceptor protein]-L-lysine = [E2 ubiquitin-conjugating enzyme]-L-cysteine + N(6)-ubiquitinyl-[acceptor protein]-L-lysine.. Its pathway is protein modification; protein ubiquitination. E3 ubiquitin-protein ligase that plays an important role in neuronal differentiation, including neurogenesis and gliogenesis, during brain development. During embryonic development initiates neuronal differentiation by inducing cell cycle arrest at the G0/G1 phase through up-regulation of cell-cycle regulatory proteins. Plays a role not only in the fetal period during the development of the nervous system, but also in the adult brain, where it is involved in the maintenance of neural functions and protection of the nervous tissue cells from oxidative stress-induced damage. Exhibits GTPase and E3 ubiquitin-protein ligase activities. Regulates dendritic spine density and synaptic neurotransmission; its ability to hydrolyze GTP is involved in the maintenance of dendritic spine density. In Rattus norvegicus (Rat), this protein is RING finger protein 112 (Rnf112).